The chain runs to 411 residues: UPF0754 membrane protein Npun_R4433 (411 aa).

2 consecutive transmembrane segments (helical) span residues 3–23 and 387–407; these read WSHLWLYVSPPVLGGIIGYFT and IVTLGGVLGFVIGLLQTVFLV.

It belongs to the UPF0754 family.

It localises to the cell inner membrane. In Nostoc punctiforme (strain ATCC 29133 / PCC 73102), this protein is UPF0754 membrane protein Npun_R4433.